A 218-amino-acid chain; its full sequence is Small ribosomal subunit protein uS3c (218 aa).

The 72-residue stretch at 47-118 (VQKHMRISSG…RLNITITRIA (72 aa)) folds into the KH type-2 domain.

Belongs to the universal ribosomal protein uS3 family. Part of the 30S ribosomal subunit.

It is found in the plastid. It localises to the chloroplast. The chain is Small ribosomal subunit protein uS3c (rps3) from Amborella trichopoda.